The following is a 366-amino-acid chain: Putative zinc metalloprotease slr1821 (366 aa).

Histidine 20 is a binding site for Zn(2+). Residue glutamate 21 is part of the active site. Histidine 24 is a binding site for Zn(2+). A run of 3 helical transmembrane segments spans residues 95–115, 293–313, and 325–345; these read AIVI…LLIG, AVIN…FLLI, and FQMG…VFLI. The PDZ domain maps to 106–188; it reads LVFAYFLLIG…VPITVEVQRG (83 aa).

The protein belongs to the peptidase M50B family. It depends on Zn(2+) as a cofactor.

It is found in the cell inner membrane. In Synechocystis sp. (strain ATCC 27184 / PCC 6803 / Kazusa), this protein is Putative zinc metalloprotease slr1821.